A 908-amino-acid polypeptide reads, in one-letter code: MGDLKSGFEEVDGVRLGYLIIKGKQMFALSQVFTDLLKNIPRTTVHKRMDHLKVKKHHCDLEELRKLKAINSIAFHAAKCTLISREDVEALYTSCKTERVLKTKRRRVGRALATKAPPPERAAAASPRPGFWKDKHQLWRGLSGAARPLPISAQSQRPGAAAARPAAHLPQIFSKYPGSHYPEIVRSPCKPPLNYETAPLQGNYVAFPSDPAYFRSLLCSKHPAAAAAAAAAAAAAAAAAAAAAYYQVSAAGPQPKAAAGAGGPGSLSYRCKRKRGGAKDCLLAPHAGARRLLLLPRSYKAKAAAAAAAAAAAAAAAAGATCLERFHLVNGFCPPPHHHHHHHHHHHHHHHRAQPPQQSHHPPHHHRPQPHLGSFPESCSSDSESSSYSDHAANDSDFGSSLSSSSNSVSSEEEEEEGEEEEEEEEEEGGSGASDSSEVSSEEEDSSTESDSSSGSSQVSVQSIRFRRTSFCKPPSVQAQANFLYHLASAAAATKPAAFEDAGRLPDLKSSVKAESPAEWNLQSWAPKASPVYCPASLGSCFAEIRNDRVSEITFPHSEISNAVKRTDLTINCLAEGASSPSPKTNNAFPQQRILREARKCLQTTPTTHCADNNTIAARFLNNDSSGAEANSEKYSKILHCPEFATDLPSSQTDPEVNAAGAAATKAENPCTDTGDKTLPFLHNIKIKVEDSSANEEYEPHLFTNKLKCECNDTKGEFYSVTESKEEDALLTTAKEGFACPEKETPSLNPLAQSQGLSCTLGSPKPEDGEYKFGARVRKNYRTLVLGKRPVLQTPPVKPNLKSARSPRPTGKTETNEGTLDDFTVINRRKKVASNVASAVKRPFHFMANFPCPPSLIIGRDGDLWPAYSLNTTKDSQTPHKAHPIWKWQLGGSAIPLPPSHKFRKFNS.

The span at 337–353 shows a compositional bias: basic residues; it reads HHHHHHHHHHHHHHHRA. A disordered region spans residues 337–461; the sequence is HHHHHHHHHH…SSSGSSQVSV (125 aa). Composition is skewed to low complexity over residues 370 to 389 and 396 to 410; these read PHLG…SSYS and SDFG…NSVS. Acidic residues predominate over residues 411 to 429; that stretch reads SEEEEEEGEEEEEEEEEEG. The segment covering 449-461 has biased composition (low complexity); that stretch reads ESDSSSGSSQVSV. A Glycyl lysine isopeptide (Lys-Gly) (interchain with G-Cter in SUMO2) cross-link involves residue Lys-688. 2 disordered regions span residues 744–763 and 792–818; these read ETPS…TLGS and LQTP…TNEG. Polar residues predominate over residues 746–761; that stretch reads PSLNPLAQSQGLSCTL.

It belongs to the DACH/dachshund family.

In Homo sapiens (Human), this protein is SKI/DACH domain-containing protein 1 (SKIDA1).